The primary structure comprises 293 residues: Signal recognition particle receptor FtsY (293 aa).

Residues 93–100 (GVNGAGKT), 175–179 (DTAGR), and 239–242 (TKLD) contribute to the GTP site.

The protein belongs to the GTP-binding SRP family. FtsY subfamily. In terms of assembly, part of the signal recognition particle protein translocation system, which is composed of SRP and FtsY. SRP is a ribonucleoprotein composed of Ffh and a 4.5S RNA molecule.

It is found in the cell inner membrane. It localises to the cytoplasm. The enzyme catalyses GTP + H2O = GDP + phosphate + H(+). Its function is as follows. Involved in targeting and insertion of nascent membrane proteins into the cytoplasmic membrane. Acts as a receptor for the complex formed by the signal recognition particle (SRP) and the ribosome-nascent chain (RNC). Interaction with SRP-RNC leads to the transfer of the RNC complex to the Sec translocase for insertion into the membrane, the hydrolysis of GTP by both Ffh and FtsY, and the dissociation of the SRP-FtsY complex into the individual components. The protein is Signal recognition particle receptor FtsY of Helicobacter pylori (strain J99 / ATCC 700824) (Campylobacter pylori J99).